The following is a 407-amino-acid chain: NAD(P)H-quinone oxidoreductase subunit 1 (407 aa).

9 consecutive transmembrane segments (helical) span residues tryptophan 28–valine 48, tryptophan 96–isoleucine 116, isoleucine 127–methionine 147, leucine 175–valine 195, leucine 203–isoleucine 223, leucine 267–proline 287, alanine 309–leucine 329, tryptophan 347–leucine 367, and threonine 374–leucine 394.

It belongs to the complex I subunit 1 family. As to quaternary structure, NDH-1 is composed of at least 11 different subunits.

The protein resides in the cell inner membrane. It carries out the reaction a plastoquinone + NADH + (n+1) H(+)(in) = a plastoquinol + NAD(+) + n H(+)(out). The enzyme catalyses a plastoquinone + NADPH + (n+1) H(+)(in) = a plastoquinol + NADP(+) + n H(+)(out). Its function is as follows. NDH-1 shuttles electrons from an unknown electron donor, via FMN and iron-sulfur (Fe-S) centers, to quinones in the respiratory and/or the photosynthetic chain. The immediate electron acceptor for the enzyme in this species is believed to be plastoquinone. Couples the redox reaction to proton translocation, and thus conserves the redox energy in a proton gradient. This Gloeobacter violaceus (strain ATCC 29082 / PCC 7421) protein is NAD(P)H-quinone oxidoreductase subunit 1.